The sequence spans 258 residues: Gamma carbonic anhydrase 3, mitochondrial (258 aa).

The N-terminal 43 residues, 1-43 (MGTMGKAFYSVGFWIRETGQALDRLGCRLQGKNHFREQLSRHR), are a transit peptide targeting the mitochondrion. Substrate contacts are provided by residues 86-88 (RGD) and 101-102 (QD). Zn(2+) contacts are provided by His-107, His-130, and His-135. Asn-209 contacts substrate.

The protein belongs to the gamma-class carbonic anhydrase family. As to quaternary structure, homotrimer. Component of the oxidoreductase respiratory chain complex I; element of the extra matrix-exposed domain, which is attached to the membrane arm of this complex. Zn(2+) is required as a cofactor.

The protein localises to the mitochondrion membrane. In terms of biological role, enzyme involved in the catabolism of H(2)CO(3) but that does not mediates the reversible hydration of carbon dioxide. Mediates complex I assembly in mitochondria and respiration. This is Gamma carbonic anhydrase 3, mitochondrial (GAMMACA3) from Arabidopsis thaliana (Mouse-ear cress).